The sequence spans 273 residues: 2,3,4,5-tetrahydropyridine-2,6-dicarboxylate N-succinyltransferase (273 aa).

Positions 106 and 143 each coordinate substrate.

This sequence belongs to the transferase hexapeptide repeat family. As to quaternary structure, homotrimer.

Its subcellular location is the cytoplasm. The catalysed reaction is (S)-2,3,4,5-tetrahydrodipicolinate + succinyl-CoA + H2O = (S)-2-succinylamino-6-oxoheptanedioate + CoA. It functions in the pathway amino-acid biosynthesis; L-lysine biosynthesis via DAP pathway; LL-2,6-diaminopimelate from (S)-tetrahydrodipicolinate (succinylase route): step 1/3. This is 2,3,4,5-tetrahydropyridine-2,6-dicarboxylate N-succinyltransferase from Wolbachia pipientis wMel.